The chain runs to 240 residues: Small ribosomal subunit protein uS2 (240 aa).

Belongs to the universal ribosomal protein uS2 family.

In Wigglesworthia glossinidia brevipalpis, this protein is Small ribosomal subunit protein uS2.